Consider the following 292-residue polypeptide: tRNA (guanine-N(7)-)-methyltransferase (292 aa).

Positions 1-52 are disordered; the sequence is MGKIEATSKEEKLRVQKEAEARRRAYRDLKKEARQMQKEVKFDTDDNSELPK. Residues Gly106, 129–130, 166–167, and Cys186 contribute to the S-adenosyl-L-methionine site; these read EI and NA. The active site involves Asp189. An S-adenosyl-L-methionine-binding site is contributed by 264 to 266; it reads TEE.

It belongs to the class I-like SAM-binding methyltransferase superfamily. TrmB family. In terms of assembly, forms a complex with TRM82.

Its subcellular location is the nucleus. The enzyme catalyses guanosine(46) in tRNA + S-adenosyl-L-methionine = N(7)-methylguanosine(46) in tRNA + S-adenosyl-L-homocysteine. It functions in the pathway tRNA modification; N(7)-methylguanine-tRNA biosynthesis. Catalyzes the formation of N(7)-methylguanine at position 46 (m7G46) in tRNA. The sequence is that of tRNA (guanine-N(7)-)-methyltransferase from Debaryomyces hansenii (strain ATCC 36239 / CBS 767 / BCRC 21394 / JCM 1990 / NBRC 0083 / IGC 2968) (Yeast).